The primary structure comprises 314 residues: tRNA pseudouridine synthase B (314 aa).

Histidine 43 serves as a coordination point for substrate. Residue aspartate 48 is the Nucleophile of the active site. Residues tyrosine 76, tyrosine 179, and leucine 200 each contribute to the substrate site.

This sequence belongs to the pseudouridine synthase TruB family. Type 1 subfamily.

It catalyses the reaction uridine(55) in tRNA = pseudouridine(55) in tRNA. Its function is as follows. Responsible for synthesis of pseudouridine from uracil-55 in the psi GC loop of transfer RNAs. In Escherichia coli O157:H7, this protein is tRNA pseudouridine synthase B.